Reading from the N-terminus, the 663-residue chain is Transketolase 2 (663 aa).

Substrate is bound at residue histidine 25. Thiamine diphosphate contacts are provided by residues histidine 65 and 113-115 (GPL). Residue aspartate 154 coordinates Mg(2+). Thiamine diphosphate contacts are provided by glycine 155 and asparagine 184. The Mg(2+) site is built by asparagine 184 and isoleucine 186. Substrate is bound by residues histidine 259, arginine 356, and serine 383. Histidine 259 is a binding site for thiamine diphosphate. The Proton donor role is filled by glutamate 410. Phenylalanine 436 contacts thiamine diphosphate. 3 residues coordinate substrate: histidine 460, aspartate 468, and arginine 519.

The protein belongs to the transketolase family. As to quaternary structure, homodimer. It depends on Mg(2+) as a cofactor. The cofactor is Ca(2+). Requires Mn(2+) as cofactor. Co(2+) is required as a cofactor. Thiamine diphosphate serves as cofactor.

It carries out the reaction D-sedoheptulose 7-phosphate + D-glyceraldehyde 3-phosphate = aldehydo-D-ribose 5-phosphate + D-xylulose 5-phosphate. Catalyzes the transfer of a two-carbon ketol group from a ketose donor to an aldose acceptor, via a covalent intermediate with the cofactor thiamine pyrophosphate. In Vibrio vulnificus (strain CMCP6), this protein is Transketolase 2 (tkt2).